Reading from the N-terminus, the 377-residue chain is Opsin-1 (377 aa).

Residues 1-58 (MDPGPGLAALQAWAAKSPAYGAANQTVVDKVPPDMMHMIDPHWYQFPPMNPLWHALLG) lie on the Extracellular side of the membrane. Asn-24 is a glycosylation site (N-linked (GlcNAc...) asparagine). A helical membrane pass occupies residues 59 to 79 (FTIGVLGFVSISGNGMVIYIF). Topologically, residues 80 to 92 (MSTKSLKTPSNLL) are cytoplasmic. Residues 93–113 (VVNLAFSDFLMMCAMSPAMVV) traverse the membrane as a helical segment. Residues 114 to 129 (NCYYETWVWGPFACEL) are Extracellular-facing. Cysteines 127 and 204 form a disulfide. A helical membrane pass occupies residues 130–150 (YACAGSLFGCASIWTMTMIAF). Over 151–169 (DRYNVIVKGIAAKPMTSNG) the chain is Cytoplasmic. Residues 170 to 190 (ALLRILGIWVFSLAWTLLPFF) form a helical membrane-spanning segment. The Extracellular portion of the chain corresponds to 191-220 (GWNRYVPEGNMTACGTDYLSKSWVSRSYIL). An N-linked (GlcNAc...) asparagine glycan is attached at Asn-200. Residues 221-241 (IYSVFVYFLPLLLIIYSYFFI) traverse the membrane as a helical segment. The Cytoplasmic segment spans residues 242 to 280 (VQAVAAHEKAMREQAKKMNVASLRSSEAANTSAECKLAK). The helical transmembrane segment at 281-301 (VALMTISLWFMAWTPYLVINY) threads the bilayer. Over 302 to 312 (TGVFESAPISP) the chain is Extracellular. A helical membrane pass occupies residues 313-335 (LATIWGSLFAKANAVYNPIVYGI). Topologically, residues 336 to 377 (SHPKYQAALYAKFPSLQCQSAPEDAGSVASGTTAVSEEKPAA) are cytoplasmic. The interval 357 to 377 (PEDAGSVASGTTAVSEEKPAA) is disordered.

It belongs to the G-protein coupled receptor 1 family. Opsin subfamily. In terms of tissue distribution, in the retina, expression is abundant and uniform in the anterior-posterior and oblique cells of the retinulae, with some expression in the proximal cells. There is no expression in the dorsal rim retinulae (at protein level).

Its subcellular location is the cell projection. It localises to the rhabdomere membrane. Visual pigments are the light-absorbing molecules that mediate vision. They consist of an apoprotein, opsin, covalently linked to cis-retinal. May play a role in photoperiodic photoreception. In Manduca sexta (Tobacco hawkmoth), this protein is Opsin-1 (OP1).